The primary structure comprises 429 residues: GTPase Obg (429 aa).

One can recognise an Obg domain in the interval 1-158 (MFVDQVKIYV…RNVQLELKVL (158 aa)). The disordered stretch occupies residues 124 to 145 (RGNKRFATPANPAPELSENGEP). One can recognise an OBG-type G domain in the interval 159-329 (ADVGLVGFPS…LLLAIADKLE (171 aa)). Residues 165-172 (GFPSVGKS), 190-194 (FTTIV), 212-215 (DLPG), 282-285 (NKMD), and 310-312 (SAV) each bind GTP. Ser172 and Thr192 together coordinate Mg(2+). Residues 351–429 (KYVAEEPDFE…LLDYEFEFMD (79 aa)) form the OCT domain.

This sequence belongs to the TRAFAC class OBG-HflX-like GTPase superfamily. OBG GTPase family. In terms of assembly, monomer. Mg(2+) serves as cofactor.

Its subcellular location is the cytoplasm. Its function is as follows. An essential GTPase which binds GTP, GDP and possibly (p)ppGpp with moderate affinity, with high nucleotide exchange rates and a fairly low GTP hydrolysis rate. Plays a role in control of the cell cycle, stress response, ribosome biogenesis and in those bacteria that undergo differentiation, in morphogenesis control. This is GTPase Obg from Listeria monocytogenes serotype 4b (strain F2365).